Consider the following 140-residue polypeptide: Large ribosomal subunit protein bL21 (140 aa).

The interval 106-140 (SGVKPAVGARTKIEPAVKPAKAKKSEAEASAEDAN) is disordered.

This sequence belongs to the bacterial ribosomal protein bL21 family. In terms of assembly, part of the 50S ribosomal subunit. Contacts protein L20.

Functionally, this protein binds to 23S rRNA in the presence of protein L20. This is Large ribosomal subunit protein bL21 from Paracoccus denitrificans (strain Pd 1222).